The sequence spans 356 residues: sn-glycerol-3-phosphate import ATP-binding protein UgpC (356 aa).

One can recognise an ABC transporter domain in the interval 4–235; sequence LKLQAVTKSW…PASLFVASFI (232 aa). Residue 37 to 44 participates in ATP binding; the sequence is GPSGCGKS.

This sequence belongs to the ABC transporter superfamily. sn-glycerol-3-phosphate importer (TC 3.A.1.1.3) family. The complex is composed of two ATP-binding proteins (UgpC), two transmembrane proteins (UgpA and UgpE) and a solute-binding protein (UgpB).

The protein localises to the cell inner membrane. The catalysed reaction is sn-glycerol 3-phosphate(out) + ATP + H2O = sn-glycerol 3-phosphate(in) + ADP + phosphate + H(+). It carries out the reaction glycerol 2-phosphate(out) + ATP + H2O = glycerol 2-phosphate(in) + ADP + phosphate + H(+). With respect to regulation, ATPase activity is stimulated when UgpB is bound to G3P. Transport is inhibited in vivo by increasing levels of internal phosphate. However, ATPase activity in proteoliposomes is neither inhibited by phosphate nor by the signal transducing protein PhoU or the phosphodiesterase UgpQ. Activated by gluconate and inhibited by fumarate. Functionally, part of the ABC transporter complex UgpBAEC involved in sn-glycerol-3-phosphate (G3P) import. Responsible for energy coupling to the transport system. Can also transport glycerophosphoryl diesters, which are hydrolyzed to G3P and alcohol during transport. The G3P moiety can be detected in the cytoplasm whereas the corresponding alcohol is usually found in the culture medium. It was proposed by Yang et al that the complex could also transport glycerol-2-phosphate (G2P) in vivo, but it was shown later by Wuttge et al that UgpB does not bind G2P, questioning this transport activity. G2P might be converted in the periplasm to G3P before its transport. This chain is sn-glycerol-3-phosphate import ATP-binding protein UgpC, found in Escherichia coli (strain K12).